A 180-amino-acid polypeptide reads, in one-letter code: Small ribosomal subunit protein bS21c (180 aa).

A chloroplast-targeting transit peptide spans 1–79; that stretch reads MASTSSLLNF…PSLAFSNTLY (79 aa). Positions 14-45 are enriched in low complexity; the sequence is LFPSNTSLPPSSNPKFPNPNSLSSQQNSISIS. 2 disordered regions span residues 14-49 and 124-180; these read LFPS…SKKH and NKQE…GAPF. Positions 130–147 are enriched in basic residues; that stretch reads KRKHREAAKRNSRRRRGP. A compositionally biased stretch (basic and acidic residues) spans 154 to 166; that stretch reads GKEEATKVDKKED.

Component of the chloroplast small ribosomal subunit (SSU). Mature 70S chloroplast ribosomes of higher plants consist of a small (30S) and a large (50S) subunit. The 30S small subunit contains 1 molecule of ribosomal RNA (16S rRNA) and 24 different proteins. The 50S large subunit contains 3 rRNA molecules (23S, 5S and 4.5S rRNA) and 33 different proteins. bS21c binds directly to 16S ribosomal RNA.

The protein localises to the plastid. It is found in the chloroplast. Component of the chloroplast ribosome (chloro-ribosome), a dedicated translation machinery responsible for the synthesis of chloroplast genome-encoded proteins, including proteins of the transcription and translation machinery and components of the photosynthetic apparatus. In Spinacia oleracea (Spinach), this protein is Small ribosomal subunit protein bS21c (rps21).